The primary structure comprises 125 residues: MVLIIEIIKIGQIGPIGQRGQSGQRGQSGQRGQSGQIGQSGQSGQSGQSGQSGQIGQIGQIGQIGQIGQIGQIGQIGQARRTGRTGRTVHRRMLQASSSFNISPDISICRRATRNMGEEERPLGC.

23 G-Q-I/R/S repeats span residues 11 to 13 (GQI), 14 to 16 (GPI), 17 to 19 (GQR), 20 to 22 (GQS), 23 to 25 (GQR), 26 to 28 (GQS), 29 to 31 (GQR), 32 to 34 (GQS), 35 to 37 (GQI), 38 to 40 (GQS), 41 to 43 (GQS), 44 to 46 (GQS), 47 to 49 (GQS), 50 to 52 (GQS), 53 to 55 (GQI), 56 to 58 (GQI), 59 to 61 (GQI), 62 to 64 (GQI), 65 to 67 (GQI), 68 to 70 (GQI), 71 to 73 (GQI), 74 to 76 (GQI), and 77 to 79 (GQA). The 23 X 3 AA approximate tandem repeats of G-Q-I/R/S stretch occupies residues 11-79 (GQIGPIGQRG…IGQIGQIGQA (69 aa)). The disordered stretch occupies residues 15–57 (PIGQRGQSGQRGQSGQRGQSGQIGQSGQSGQSGQSGQSGQIGQ).

The protein localises to the secreted. Its function is as follows. Hypoxia responsive morphology factor that modulates the expression of the subtelomeric hrmA-associated cluster (HAC) containing genes that alter the hyphal surface (such as reduced total chitin or increased beta-glucan exposure) and perturb inter-hyphal interactions within the developing biofilms, resulting in a loss of vertically aligned polarized growing filaments. Consequently, this hypoxia-typic morphotype (called H-MORPH) with altered biofilm architecture leads to increased hypoxia fitness, increased host inflammation, rapid disease progression, and mortality in a murine model of invasive aspergillosis. GcnA is directly involved in the reduction total surface chitin and the increase beta-glucan exposure, and mediates the detachment of the extracellular matrix and especially of its component galactosaminogalactan (GAG). This is Subtelomeric hrmA-associated cluster protein cgnA from Aspergillus fumigatus (strain CBS 144.89 / FGSC A1163 / CEA10) (Neosartorya fumigata).